A 148-amino-acid chain; its full sequence is Small ribosomal subunit protein eS19 (148 aa).

This sequence belongs to the eukaryotic ribosomal protein eS19 family. As to quaternary structure, part of the 30S ribosomal subunit.

In terms of biological role, may be involved in maturation of the 30S ribosomal subunit. The polypeptide is Small ribosomal subunit protein eS19 (Methanocaldococcus jannaschii (strain ATCC 43067 / DSM 2661 / JAL-1 / JCM 10045 / NBRC 100440) (Methanococcus jannaschii)).